We begin with the raw amino-acid sequence, 394 residues long: T-cell acute lymphocytic leukemia protein 1 (394 aa).

Residues 1–17 show a composition bias toward basic and acidic residues; the sequence is MSLKMMERLSTDMDGTR. The tract at residues 1–49 is disordered; that stretch reads MSLKMMERLSTDMDGTRDVASPPARQDAAEPERTVELSGVKEGAAPNSP. 7 repeat units span residues 83-89, 94-100, 105-111, 116-122, 127-133, 149-155, and 167-173. The segment at 83–173 is 7 X 7 AA approximate repeats of [TS]-E-L-C-R-[AP]-P; it reads TELCRATLTP…TATTELCRPP (91 aa). The region spanning 262 to 314 is the bHLH domain; it reads VRRIFTNSRERWRQQNVNGAFAELRKLIPTHPPDKKLSKNEILRLAMKYINFL. Residues 347 to 394 form a disordered region; it reads LSPNSSCGSSLDGAPSPDSYSEEHDALDSKHSRNLHQAMLPIDGSGQR. A compositionally biased stretch (basic and acidic residues) spans 367-377; it reads SEEHDALDSKH.

As to expression, first expressed in patches on the ventral side of the embryo in a region that will give rise to hematopoietic tissue. By late neurula stages, expressed throughout the ventral blood island region. By tailbud stages, expression extends to probable vascular progenitor cells, but is excluded from the presumptive liver anlage. Also expressed in the central nervous system at the tailbud stage.

The protein localises to the nucleus. Transcription factor that acts synergistically with lmo2 and gata1 to specify embryonic dorsal mesoderm to a hematopoietic fate. In Xenopus laevis (African clawed frog), this protein is T-cell acute lymphocytic leukemia protein 1.